Consider the following 1594-residue polypeptide: Mediator of RNA polymerase II transcription subunit 12 (1594 aa).

Disordered stretches follow at residues 1-116 (MIPH…LSWR) and 1499-1532 (PSPA…TPAV). Composition is skewed to low complexity over residues 81–93 (PAAP…SPAP) and 1499–1521 (PSPA…GAPS).

It belongs to the Mediator complex subunit 12 family. In terms of assembly, component of the srb8-11 complex, which itself associates with the Mediator complex.

The protein localises to the nucleus. Its function is as follows. Component of the srb8-11 complex. The srb8-11 complex is a regulatory module of the Mediator complex which is itself involved in regulation of basal and activated RNA polymerase II-dependent transcription. The srb8-11 complex may be involved in the transcriptional repression of a subset of genes regulated by Mediator. It may inhibit the association of the Mediator complex with RNA polymerase II to form the holoenzyme complex. In Aspergillus oryzae (strain ATCC 42149 / RIB 40) (Yellow koji mold), this protein is Mediator of RNA polymerase II transcription subunit 12 (srb8).